A 335-amino-acid chain; its full sequence is D-alanine--D-alanine ligase (335 aa).

The 206-residue stretch at 124 to 329 folds into the ATP-grasp domain; that stretch reads KMWFSALGVP…FTHYLYSNIK (206 aa). 154–209 contacts ATP; sequence ALENWGSIFIKAASQGSSVGCYRVDSQDELVSSLEQAFSFSPYVIVEKTINARELE. Residues Asp-283, Glu-296, and Asn-298 each contribute to the Mg(2+) site.

Belongs to the D-alanine--D-alanine ligase family. Requires Mg(2+) as cofactor. Mn(2+) serves as cofactor.

The protein localises to the cytoplasm. The enzyme catalyses 2 D-alanine + ATP = D-alanyl-D-alanine + ADP + phosphate + H(+). It participates in cell wall biogenesis; peptidoglycan biosynthesis. Functionally, cell wall formation. This is D-alanine--D-alanine ligase from Shewanella woodyi (strain ATCC 51908 / MS32).